Here is a 628-residue protein sequence, read N- to C-terminus: 1,4-alpha-glucan branching enzyme GlgB (628 aa).

The active-site Nucleophile is the aspartate 304. Catalysis depends on glutamate 355, which acts as the Proton donor.

Belongs to the glycosyl hydrolase 13 family. GlgB subfamily. Monomer.

The enzyme catalyses Transfers a segment of a (1-&gt;4)-alpha-D-glucan chain to a primary hydroxy group in a similar glucan chain.. It functions in the pathway glycan biosynthesis; glycogen biosynthesis. In terms of biological role, catalyzes the formation of the alpha-1,6-glucosidic linkages in glycogen by scission of a 1,4-alpha-linked oligosaccharide from growing alpha-1,4-glucan chains and the subsequent attachment of the oligosaccharide to the alpha-1,6 position. This chain is 1,4-alpha-glucan branching enzyme GlgB, found in Streptococcus mutans serotype c (strain ATCC 700610 / UA159).